We begin with the raw amino-acid sequence, 198 residues long: Ribonuclease HII (198 aa).

The region spanning 3–198 (LSVGGIDEAG…SWETVGKLFK (196 aa)) is the RNase H type-2 domain. Residues Asp-9, Glu-10, and Asp-104 each contribute to the a divalent metal cation site.

It belongs to the RNase HII family. Mn(2+) serves as cofactor. It depends on Mg(2+) as a cofactor.

The protein resides in the cytoplasm. It carries out the reaction Endonucleolytic cleavage to 5'-phosphomonoester.. Functionally, endonuclease that specifically degrades the RNA of RNA-DNA hybrids. This chain is Ribonuclease HII, found in Pyrobaculum arsenaticum (strain DSM 13514 / JCM 11321 / PZ6).